We begin with the raw amino-acid sequence, 33 residues long: Actin (33 aa).

It belongs to the actin family.

Its subcellular location is the cytoplasm. It is found in the cytoskeleton. The catalysed reaction is ATP + H2O = ADP + phosphate + H(+). Actins are highly conserved proteins that are involved in various types of cell motility and are ubiquitously expressed in all eukaryotic cells. This chain is Actin, found in Dictyocaulus viviparus (Bovine lungworm).